The following is a 185-amino-acid chain: UPF0301 protein HDEF_0602 (185 aa).

Belongs to the UPF0301 (AlgH) family.

The chain is UPF0301 protein HDEF_0602 from Hamiltonella defensa subsp. Acyrthosiphon pisum (strain 5AT).